We begin with the raw amino-acid sequence, 265 residues long: MATTVAIEVSNLSKSFKGKTAIKNVYCSINEGEMVALIGASGSGKSTLLRHINGLHIGDAGTVYIFGTVLQSKGKVHSKITSLRSQIGCIFQQFNLVNRLTVIENVLVGKLARLSILRSILRLFSKEEKAQALSALERVGIIEHAYKRASKLSGGQQQRVAIARCLVQGAKIILADEPIASLDPESARKVMELLVQLNRQSGITVVASLHQIQMVRSYFDRAIALRDGEVMFDGATVELDDKKLNEIYGTAAEELVMRGHGELLV.

The ABC transporter domain maps to 7–252; it reads IEVSNLSKSF…KLNEIYGTAA (246 aa). 39 to 46 serves as a coordination point for ATP; it reads GASGSGKS.

The protein belongs to the ABC transporter superfamily. Phosphonates importer (TC 3.A.1.9.1) family. As to quaternary structure, the complex is composed of two ATP-binding proteins (PhnC), two transmembrane proteins (PhnE) and a solute-binding protein (PhnD).

Its subcellular location is the cell inner membrane. The catalysed reaction is phosphonate(out) + ATP + H2O = phosphonate(in) + ADP + phosphate + H(+). Its function is as follows. Part of the ABC transporter complex PhnCDE involved in phosphonates import. Responsible for energy coupling to the transport system. The sequence is that of Phosphonates import ATP-binding protein PhnC 1 from Nostoc sp. (strain PCC 7120 / SAG 25.82 / UTEX 2576).